The primary structure comprises 365 residues: Transmembrane protein 25 (365 aa).

Residues 1–26 (MELPLSQATLRHTLLLLPALLSSGQG) form the signal peptide. Over 27–232 (ELAPQIDGQT…APGLLATRIE (206 aa)) the chain is Extracellular. The Ig-like domain occupies 30 to 123 (PQIDGQTWAE…SGRPANASVI (94 aa)). A disulfide bridge links C52 with C107. N-linked (GlcNAc...) asparagine glycans are attached at residues N106, N162, N192, and N205. A helical transmembrane segment spans residues 233 to 253 (VPLLGIVVAGGLALGTLVGFS). Over 254 to 365 (TLVACLVCRK…SSVSSDEIWL (112 aa)) the chain is Cytoplasmic.

In terms of assembly, interacts with GRIN2B. In terms of tissue distribution, expressed throughout the brain with higher levels within the hippocampus.

It is found in the late endosome. Its subcellular location is the lysosome. The protein localises to the cell membrane. The protein resides in the secreted. In terms of biological role, in neurons, modulates the degradation of NMDA receptor GRIN2B subunit. Plays a role in the regulation of neuronal excitability. The chain is Transmembrane protein 25 from Mus musculus (Mouse).